We begin with the raw amino-acid sequence, 141 residues long: Putative phosphatidylglycerol/phosphatidylinositol transfer protein DDB_G0278295 (141 aa).

The first 19 residues, M1–T19, serve as a signal peptide directing secretion. Residues N82 and N104 are each glycosylated (N-linked (GlcNAc...) asparagine).

The protein belongs to the NPC2 family. Monomer.

Its function is as follows. Catalyzes the intermembrane transfer of phosphatidylglycerol and phosphatidylinositol. This chain is Putative phosphatidylglycerol/phosphatidylinositol transfer protein DDB_G0278295, found in Dictyostelium discoideum (Social amoeba).